The sequence spans 258 residues: Small ribosomal subunit protein uS2 (258 aa).

The segment at glycine 222–glutamine 258 is disordered.

It belongs to the universal ribosomal protein uS2 family.

The polypeptide is Small ribosomal subunit protein uS2 (Campylobacter fetus subsp. fetus (strain 82-40)).